Consider the following 185-residue polypeptide: Peptidyl-tRNA hydrolase (185 aa).

Tyrosine 14 serves as a coordination point for tRNA. The active-site Proton acceptor is the histidine 19. Residues phenylalanine 64, asparagine 66, and asparagine 112 each contribute to the tRNA site.

The protein belongs to the PTH family. As to quaternary structure, monomer.

Its subcellular location is the cytoplasm. The catalysed reaction is an N-acyl-L-alpha-aminoacyl-tRNA + H2O = an N-acyl-L-amino acid + a tRNA + H(+). In terms of biological role, hydrolyzes ribosome-free peptidyl-tRNAs (with 1 or more amino acids incorporated), which drop off the ribosome during protein synthesis, or as a result of ribosome stalling. Its function is as follows. Catalyzes the release of premature peptidyl moieties from peptidyl-tRNA molecules trapped in stalled 50S ribosomal subunits, and thus maintains levels of free tRNAs and 50S ribosomes. This Lactobacillus gasseri (strain ATCC 33323 / DSM 20243 / BCRC 14619 / CIP 102991 / JCM 1131 / KCTC 3163 / NCIMB 11718 / NCTC 13722 / AM63) protein is Peptidyl-tRNA hydrolase.